The primary structure comprises 281 residues: MSSYDNHQALAGLTLGKSTDYRDTYDASLLQGVPRSLNRDPLGLHADNLPFHGADIWTLYELSWLNGKGLPQVAVGHVELPDTSVNLVESKSFKLYLNSFNQTRFASWQDVAETLTRDLSACAQGEVKVALYRLDELEGQPIAHLHGACIDDQDIEIDNYQFSTDYLQGAASGKIVEETLVSHLLKSNCLITHQPDWGSVQIQYRGAKIDREQLLRYLVSFRHHNEFHEQCVERIFNDILRFCQPESLSVYARYTRRGGLDINPWRSNGDFSPATGRLARQ.

88 to 90 (VES) is a binding site for substrate. NADPH is bound at residue 90–91 (SK). C189 functions as the Thioimide intermediate in the catalytic mechanism. D196 serves as the catalytic Proton donor. 228 to 229 (HE) is a substrate binding site. 257 to 258 (RG) is a binding site for NADPH.

The protein belongs to the GTP cyclohydrolase I family. QueF type 2 subfamily. As to quaternary structure, homodimer.

It is found in the cytoplasm. The catalysed reaction is 7-aminomethyl-7-carbaguanine + 2 NADP(+) = 7-cyano-7-deazaguanine + 2 NADPH + 3 H(+). Its pathway is tRNA modification; tRNA-queuosine biosynthesis. Functionally, catalyzes the NADPH-dependent reduction of 7-cyano-7-deazaguanine (preQ0) to 7-aminomethyl-7-deazaguanine (preQ1). This chain is NADPH-dependent 7-cyano-7-deazaguanine reductase, found in Klebsiella pneumoniae (strain 342).